The sequence spans 238 residues: Uridylate kinase (238 aa).

Position 12-15 (12-15 (KLSG)) interacts with ATP. Residues 20 to 25 (GQQGFG) are involved in allosteric activation by GTP. Position 54 (Gly-54) interacts with UMP. The ATP site is built by Gly-55 and Arg-59. Residues Asp-74 and 135–142 (TGNPFFTT) contribute to the UMP site. Positions 162, 163, 168, and 171 each coordinate ATP.

This sequence belongs to the UMP kinase family. In terms of assembly, homohexamer.

It localises to the cytoplasm. It carries out the reaction UMP + ATP = UDP + ADP. Its pathway is pyrimidine metabolism; CTP biosynthesis via de novo pathway; UDP from UMP (UMPK route): step 1/1. With respect to regulation, allosterically activated by GTP. Inhibited by UTP. Its function is as follows. Catalyzes the reversible phosphorylation of UMP to UDP. This chain is Uridylate kinase, found in Bradyrhizobium diazoefficiens (strain JCM 10833 / BCRC 13528 / IAM 13628 / NBRC 14792 / USDA 110).